The following is a 106-amino-acid chain: Pyrimidine/purine nucleoside phosphorylase (106 aa).

This sequence belongs to the nucleoside phosphorylase PpnP family.

The catalysed reaction is a purine D-ribonucleoside + phosphate = a purine nucleobase + alpha-D-ribose 1-phosphate. It catalyses the reaction adenosine + phosphate = alpha-D-ribose 1-phosphate + adenine. The enzyme catalyses cytidine + phosphate = cytosine + alpha-D-ribose 1-phosphate. It carries out the reaction guanosine + phosphate = alpha-D-ribose 1-phosphate + guanine. The catalysed reaction is inosine + phosphate = alpha-D-ribose 1-phosphate + hypoxanthine. It catalyses the reaction thymidine + phosphate = 2-deoxy-alpha-D-ribose 1-phosphate + thymine. The enzyme catalyses uridine + phosphate = alpha-D-ribose 1-phosphate + uracil. It carries out the reaction xanthosine + phosphate = alpha-D-ribose 1-phosphate + xanthine. Catalyzes the phosphorolysis of diverse nucleosides, yielding D-ribose 1-phosphate and the respective free bases. Can use uridine, adenosine, guanosine, cytidine, thymidine, inosine and xanthosine as substrates. Also catalyzes the reverse reactions. In Burkholderia ambifaria (strain MC40-6), this protein is Pyrimidine/purine nucleoside phosphorylase.